The sequence spans 162 residues: Onchocystatin (162 aa).

Residues 1 to 32 (MLTIKDGTLLIHLLLFSVVALVQLQGAKSARA) form the signal peptide. The segment at 30-54 (ARAKNPSKMESKTGENQDRPVLLGG) is disordered. The span at 36-47 (SKMESKTGENQD) shows a compositional bias: basic and acidic residues. Positions 97–101 (QVVAG) match the Secondary area of contact motif. A disulfide bridge connects residues Cys115 and Cys128.

Belongs to the cystatin family. In terms of tissue distribution, expressed in the cuticle of L3 and L4 larvae, female adult, and in the eggshell of developing microfilariae.

Functionally, cysteine protease inhibitor which inhibits members of the peptidase C1 family. In the human host, inhibits CTSL/cathepsin L and CTSS/cathepsin S and to a lesser extent CTSB/cathepsin B which may cause defects in antigen processing and thereby impair antigen-driven T cell proliferation. The sequence is that of Onchocystatin from Onchocerca volvulus.